The primary structure comprises 763 residues: Phosphoglycerol transferase I (763 aa).

4 helical membrane-spanning segments follow: residues 1–21 (MSEL…AWKA), 26–46 (WWFA…ITLF), 77–97 (ILPG…LGWI), and 108–128 (FGYS…SPAF).

This sequence belongs to the OpgB family.

It localises to the cell inner membrane. It catalyses the reaction a phosphatidylglycerol + a membrane-derived-oligosaccharide D-glucose = a 1,2-diacyl-sn-glycerol + a membrane-derived-oligosaccharide 6-(glycerophospho)-D-glucose.. It functions in the pathway glycan metabolism; osmoregulated periplasmic glucan (OPG) biosynthesis. Its function is as follows. Transfers a phosphoglycerol residue from phosphatidylglycerol to the membrane-bound nascent glucan backbones. This chain is Phosphoglycerol transferase I, found in Escherichia coli (strain SE11).